The primary structure comprises 171 residues: Large ribosomal subunit protein uL10 (171 aa).

The protein belongs to the universal ribosomal protein uL10 family. In terms of assembly, part of the ribosomal stalk of the 50S ribosomal subunit. The N-terminus interacts with L11 and the large rRNA to form the base of the stalk. The C-terminus forms an elongated spine to which L12 dimers bind in a sequential fashion forming a multimeric L10(L12)X complex.

In terms of biological role, forms part of the ribosomal stalk, playing a central role in the interaction of the ribosome with GTP-bound translation factors. The polypeptide is Large ribosomal subunit protein uL10 (Corynebacterium efficiens (strain DSM 44549 / YS-314 / AJ 12310 / JCM 11189 / NBRC 100395)).